A 233-amino-acid chain; its full sequence is tRNA (guanine-N(7)-)-methyltransferase (233 aa).

S-adenosyl-L-methionine is bound by residues glutamate 64, glutamate 89, aspartate 116, and aspartate 138. Residue aspartate 138 is part of the active site. Substrate contacts are provided by residues lysine 142, aspartate 174, and 212 to 215 (TRYE).

Belongs to the class I-like SAM-binding methyltransferase superfamily. TrmB family.

The enzyme catalyses guanosine(46) in tRNA + S-adenosyl-L-methionine = N(7)-methylguanosine(46) in tRNA + S-adenosyl-L-homocysteine. It participates in tRNA modification; N(7)-methylguanine-tRNA biosynthesis. In terms of biological role, catalyzes the formation of N(7)-methylguanine at position 46 (m7G46) in tRNA. The chain is tRNA (guanine-N(7)-)-methyltransferase from Rhizobium johnstonii (strain DSM 114642 / LMG 32736 / 3841) (Rhizobium leguminosarum bv. viciae).